A 93-amino-acid chain; its full sequence is MSRSVKKGPYVLDSLLKKIEEMNKANDKKVIKTWSRASTIFPQMVGHTIAVHDGKKHVPVYITEDMVGHKLGEFAPTRTYKGHSGNEKSTSLR.

This sequence belongs to the universal ribosomal protein uS19 family.

Its function is as follows. Protein S19 forms a complex with S13 that binds strongly to the 16S ribosomal RNA. This Ruminiclostridium cellulolyticum (strain ATCC 35319 / DSM 5812 / JCM 6584 / H10) (Clostridium cellulolyticum) protein is Small ribosomal subunit protein uS19.